Consider the following 914-residue polypeptide: Solute carrier family 12 member 9 (914 aa).

Residues 1-36 lie on the Cytoplasmic side of the membrane; that stretch reads MASENSPLLAYRLLGEEGAAFPPNGAGGSGVASARK. The residue at position 6 (Ser6) is a Phosphoserine. A helical transmembrane segment spans residues 37–57; sequence LSTFLGVVVPTVLSMFSIVVF. The Extracellular portion of the chain corresponds to 58–72; it reads LRIGFVVGHAGLLQA. The helical transmembrane segment at 73-93 threads the bilayer; that stretch reads LAMLLVAYVILALTVLSVCAI. At 94–119 the chain is on the cytoplasmic side; it reads ATNGAVRGGGAYFMISRTLGPEVGGS. A helical transmembrane segment spans residues 120 to 140; that stretch reads IGLMFYLANVCGCAVSLLGLV. At 141 to 167 the chain is on the extracellular side; it reads ESILDVFGADVTGSSGIKVLPQGYGWN. A helical membrane pass occupies residues 168–188; sequence LLYGSLLLGLVGGVCALGAGL. Over 189–193 the chain is Cytoplasmic; the sequence is YARAS. Residues 194-214 form a helical membrane-spanning segment; sequence FLTFLLVSGSLASVLVSFVAV. Residues 215–262 are Extracellular-facing; sequence GPRNITLAPRPGTNGSSVPPRHGHFTGFNGSTLKDNLGAGYAEDYTTG. N-linked (GlcNAc...) asparagine glycosylation is found at Asn218, Asn228, and Asn243. The chain crosses the membrane as a helical span at residues 263–283; sequence AMMTFASVFAVLFNGCTGIMA. The Cytoplasmic portion of the chain corresponds to 284–297; that stretch reads GANMSGELKDPSRA. The chain crosses the membrane as a helical span at residues 298–318; sequence IPLGTIIAVAYTFFIYILLFF. The Extracellular portion of the chain corresponds to 319 to 338; the sequence is LSSFTCDRALLQGDYGFFRD. The helical transmembrane segment at 339–359 threads the bilayer; sequence ISLWPPLVLIGIYATALSASM. Residues 360–376 lie on the Cytoplasmic side of the membrane; that stretch reads SSLIGASRILHALAQDD. A helical membrane pass occupies residues 377 to 399; it reads LFGVILAPAKVVSGGGNPWGAVL. Topologically, residues 400-416 are extracellular; that stretch reads YSWGLVQLVLLAGKLNT. A helical transmembrane segment spans residues 417–437; the sequence is LAAVVTVFYLVAYAAVDLSCL. The Cytoplasmic portion of the chain corresponds to 438 to 466; that stretch reads SLEWASAPNFRPTFSLFSWHTCLLGVASC. Residues 467 to 487 traverse the membrane as a helical segment; sequence LLMMFLISPGAAGGSLLLMGL. At 488 to 740 the chain is on the extracellular side; it reads LSALLTARGG…LLRPRGGPGY (253 aa). A disordered region spans residues 645–678; sequence PAFSEPAEGTREGGSPALSTLFPPPRAPGSPRAL. The helical transmembrane segment at 741–761 threads the bilayer; sequence VDVCGLFLLQMATILSMVPAW. Over 762-914 the chain is Cytoplasmic; that stretch reads HSARLRIFLC…GVTPVTCTDL (153 aa). The disordered stretch occupies residues 843-864; it reads QQGRGTGGGPGGPEGRDGEEGP. Over residues 846–855 the composition is skewed to gly residues; that stretch reads RGTGGGPGGP.

It belongs to the SLC12A transporter family. Interacts with SLC12A1.

It is found in the cell membrane. The protein resides in the lysosome membrane. Functionally, may be an inhibitor of SLC12A1. Seems to correspond to a subunit of a multimeric transport system and thus, additional subunits may be required for its function. May play a role in lysosomal ion flux and osmoregulation. The polypeptide is Solute carrier family 12 member 9 (Slc12a9) (Rattus norvegicus (Rat)).